A 634-amino-acid chain; its full sequence is Chaperone protein HtpG (634 aa).

The segment at 1–342 (MTVDTDKQTL…SADLSLNVSR (342 aa)) is a; substrate-binding. Residues 343 to 559 (EILQSGPVVD…QGDLGLQMRQ (217 aa)) form a b region. The segment at 560–634 (LLEASGQAVP…LNKLLLELSA (75 aa)) is c.

This sequence belongs to the heat shock protein 90 family. As to quaternary structure, homodimer.

It localises to the cytoplasm. Functionally, molecular chaperone. Has ATPase activity. The polypeptide is Chaperone protein HtpG (Xanthomonas campestris pv. campestris (strain 8004)).